An 83-amino-acid chain; its full sequence is Small ribosomal subunit protein bS16 (83 aa).

Belongs to the bacterial ribosomal protein bS16 family.

This chain is Small ribosomal subunit protein bS16, found in Borrelia hermsii (strain HS1 / DAH).